Reading from the N-terminus, the 71-residue chain is UPF0346 protein SMU_1621c (71 aa).

It belongs to the UPF0346 family.

The sequence is that of UPF0346 protein SMU_1621c from Streptococcus mutans serotype c (strain ATCC 700610 / UA159).